A 97-amino-acid polypeptide reads, in one-letter code: HssA/B-like protein 48 (97 aa).

Disordered regions lie at residues 1–20 (MTLFASISSISNPSTSSKSS) and 78–97 (GSGYPGNGGMGGGNGSCCGI).

Belongs to the hssA/B family.

The chain is HssA/B-like protein 48 (hssl48) from Dictyostelium discoideum (Social amoeba).